A 483-amino-acid polypeptide reads, in one-letter code: Kynureninase 1 (483 aa).

Pyridoxal 5'-phosphate is bound by residues Leu-147, Thr-148, 175–178 (FPSD), Ser-232, Asp-261, His-264, and Tyr-286. Lys-287 bears the N6-(pyridoxal phosphate)lysine mark. Pyridoxal 5'-phosphate is bound by residues Trp-326 and Asn-354.

The protein belongs to the kynureninase family. In terms of assembly, homodimer. Pyridoxal 5'-phosphate is required as a cofactor.

It is found in the cytoplasm. It carries out the reaction L-kynurenine + H2O = anthranilate + L-alanine + H(+). The catalysed reaction is 3-hydroxy-L-kynurenine + H2O = 3-hydroxyanthranilate + L-alanine + H(+). Its pathway is amino-acid degradation; L-kynurenine degradation; L-alanine and anthranilate from L-kynurenine: step 1/1. It functions in the pathway cofactor biosynthesis; NAD(+) biosynthesis; quinolinate from L-kynurenine: step 2/3. In terms of biological role, catalyzes the cleavage of L-kynurenine (L-Kyn) and L-3-hydroxykynurenine (L-3OHKyn) into anthranilic acid (AA) and 3-hydroxyanthranilic acid (3-OHAA), respectively. This chain is Kynureninase 1 (bna5-1), found in Aspergillus terreus (strain NIH 2624 / FGSC A1156).